The sequence spans 209 residues: 60S ribosomal subunit assembly/export protein loc-1 (209 aa).

Disordered regions lie at residues 1-53 (MAPT…SKGR) and 135-209 (REAR…AAPE). Basic and acidic residues-rich tracts occupy residues 20 to 33 (GSKDAERSRNDGVL) and 135 to 159 (REARRAEAEKKEAERKARLEETKDS). The stretch at 126–170 (IKARQMEEIREARRAEAEKKEAERKARLEETKDSLRKKRKRSKQS) forms a coiled coil.

The protein belongs to the LOC1 family. As to quaternary structure, component of the 66S pre-ribosomal particle.

It is found in the nucleus. It localises to the nucleolus. Functionally, required for efficient assembly and nuclear export of the 60S ribosomal subunit. This is 60S ribosomal subunit assembly/export protein loc-1 (loc-1) from Neurospora crassa (strain ATCC 24698 / 74-OR23-1A / CBS 708.71 / DSM 1257 / FGSC 987).